The primary structure comprises 517 residues: Protein disulfide-isomerase A5 (517 aa).

An N-terminal signal peptide occupies residues 1–21; the sequence is MARAWGLLLAIGVVLPTWLSS. 4 cysteine pairs are disulfide-bonded: Cys-83–Cys-92, Cys-180–Cys-183, Cys-303–Cys-306, and Cys-424–Cys-427. Thioredoxin domains lie at 132–259, 268–382, and 376–504; these read FLKD…NPLP, PWAD…NPEA, and WMQN…TLRE. Residues 514 to 517 carry the Prevents secretion from ER motif; the sequence is REEL.

It belongs to the protein disulfide isomerase family. In terms of assembly, interacts with CALR (via P-domain).

It localises to the endoplasmic reticulum lumen. It catalyses the reaction Catalyzes the rearrangement of -S-S- bonds in proteins.. In Mus musculus (Mouse), this protein is Protein disulfide-isomerase A5 (Pdia5).